A 601-amino-acid polypeptide reads, in one-letter code: Aspartate--tRNA ligase (601 aa).

Glutamate 183 contributes to the L-aspartate binding site. The interval 207 to 210 (QIFK) is aspartate. Arginine 229 provides a ligand contact to L-aspartate. Residues 229 to 231 (RDE) and glutamine 238 each bind ATP. Position 457 (histidine 457) interacts with L-aspartate. Position 497 (glutamate 497) interacts with ATP. Position 504 (arginine 504) interacts with L-aspartate. ATP is bound at residue 549 to 552 (GIDR).

The protein belongs to the class-II aminoacyl-tRNA synthetase family. Type 1 subfamily. In terms of assembly, homodimer.

The protein localises to the cytoplasm. The catalysed reaction is tRNA(Asp) + L-aspartate + ATP = L-aspartyl-tRNA(Asp) + AMP + diphosphate. Functionally, catalyzes the attachment of L-aspartate to tRNA(Asp) in a two-step reaction: L-aspartate is first activated by ATP to form Asp-AMP and then transferred to the acceptor end of tRNA(Asp). In Leptospira interrogans serogroup Icterohaemorrhagiae serovar copenhageni (strain Fiocruz L1-130), this protein is Aspartate--tRNA ligase.